Reading from the N-terminus, the 238-residue chain is tRNA (guanine-N(7)-)-methyltransferase (238 aa).

E68, E93, D120, and D143 together coordinate S-adenosyl-L-methionine. D143 is a catalytic residue. Substrate is bound by residues K147, D179, and 216 to 219 (TKFE).

It belongs to the class I-like SAM-binding methyltransferase superfamily. TrmB family. In terms of assembly, monomer.

It catalyses the reaction guanosine(46) in tRNA + S-adenosyl-L-methionine = N(7)-methylguanosine(46) in tRNA + S-adenosyl-L-homocysteine. It functions in the pathway tRNA modification; N(7)-methylguanine-tRNA biosynthesis. Functionally, catalyzes the formation of N(7)-methylguanine at position 46 (m7G46) in tRNA. The polypeptide is tRNA (guanine-N(7)-)-methyltransferase (Edwardsiella ictaluri (strain 93-146)).